The chain runs to 1030 residues: Teashirt homolog 2 (1030 aa).

The tract at residues 1–120 is disordered; sequence MPRRKQQAPK…THPKLPSEPH (120 aa). Residues 11-42 are a coiled coil; it reads RAAGYAQEEVLKEEEEIKEEEEEEEDSGSVAQ. A compositionally biased stretch (acidic residues) spans 21–37; the sequence is LKEEEEIKEEEEEEEDS. 2 stretches are compositionally biased toward polar residues: residues 39–49 and 66–95; these read SVAQHQSSNDT and SCQNSPGSHLSNQDAENESLLSDASDQVSD. Basic and acidic residues predominate over residues 103 to 120; that stretch reads DVSDKKANTHPKLPSEPH. Residue Lys189 forms a Glycyl lysine isopeptide (Lys-Gly) (interchain with G-Cter in SUMO2) linkage. 2 consecutive C2H2-type zinc fingers follow at residues 216 to 240 and 276 to 300; these read FRCRQCSAAYDTLVELTVHMNETGH and LKCMFCGDSFDSLQDLSVHMIKTKH. Residues 240–266 are disordered; it reads HYQDDNRKKDKLRPTSYSKPRKRAFQD. Glycyl lysine isopeptide (Lys-Gly) (interchain with G-Cter in SUMO2) cross-links involve residues Lys307 and Lys316. Positions 328–348 are disordered; the sequence is VNRPCSPDSTTGSLADSFSSQ. Residues 334 to 348 show a composition bias toward polar residues; the sequence is PDSTTGSLADSFSSQ. Residues 381-405 form a C2H2-type 3; atypical zinc finger; it reads LKCMECGSSHDTLQQLTTHMMVTGH. Lys418 is covalently cross-linked (Glycyl lysine isopeptide (Lys-Gly) (interchain with G-Cter in SUMO2)). Residues 432 to 459 are compositionally biased toward polar residues; sequence SLSETPNSESLAPKPSSNSPSECTASTT. A disordered region spans residues 432 to 488; it reads SLSETPNSESLAPKPSSNSPSECTASTTELKKESKKEKGEGIEDEQGVKSEDYEDSL. Over residues 460-482 the composition is skewed to basic and acidic residues; sequence ELKKESKKEKGEGIEDEQGVKSE. Glycyl lysine isopeptide (Lys-Gly) (interchain with G-Cter in SUMO2) cross-links involve residues Lys462, Lys480, Lys497, and Lys601. Basic and acidic residues-rich tracts occupy residues 608–623 and 633–664; these read DEVVKQCGKESPHEEA and SFSKIEPPSESRKAEPCPLKEEEKPQKEKPEP. Disordered regions lie at residues 608-687, 703-726, and 759-784; these read DEVV…LPSI, KATEPLRSPSCSSPNSSTSPVFHK, and QPIDLTKSKSKRAESSQAQSCTSPPQ. Lys652 is covalently cross-linked (Glycyl lysine isopeptide (Lys-Gly) (interchain with G-Cter in SUMO2)). Residues 710–722 show a composition bias toward low complexity; the sequence is SPSCSSPNSSTSP. The span at 773–783 shows a compositional bias: polar residues; it reads SSQAQSCTSPP. Glycyl lysine isopeptide (Lys-Gly) (interchain with G-Cter in SUMO2) cross-links involve residues Lys796 and Lys816. The homeobox DNA-binding region spans 837-907; sequence RKGRQSNWNP…NVKYQLRKTG (71 aa). A C2H2-type 4 zinc finger spans residues 922–944; it reads FYCSDCASQFRTPSTYISHLESH. Residue Lys962 forms a Glycyl lysine isopeptide (Lys-Gly) (interchain with G-Cter in SUMO2) linkage. Disordered regions lie at residues 965 to 987 and 1009 to 1030; these read QEISRVSSAQRSPETIAGEEDTD and LSKTHSKSPEHHSQFVADVDEE. Positions 968-977 are enriched in polar residues; it reads SRVSSAQRSP. A Phosphoserine modification is found at Ser976. Residues 990–1013 form a C2H2-type 5 zinc finger; that stretch reads FKCKLCRRTFVSKHAVKLHLSKTH.

The protein belongs to the teashirt C2H2-type zinc-finger protein family. Interacts (via homeobox domain) with APBB1 (via PID domain 1). Sumoylated.

Its subcellular location is the nucleus. In terms of biological role, probable transcriptional regulator involved in developmental processes. May act as a transcriptional repressor (Potential). In Mus musculus (Mouse), this protein is Teashirt homolog 2 (Tshz2).